The sequence spans 106 residues: Large ribosomal subunit protein uL24 (106 aa).

The protein belongs to the universal ribosomal protein uL24 family. As to quaternary structure, part of the 50S ribosomal subunit.

Functionally, one of two assembly initiator proteins, it binds directly to the 5'-end of the 23S rRNA, where it nucleates assembly of the 50S subunit. In terms of biological role, one of the proteins that surrounds the polypeptide exit tunnel on the outside of the subunit. The sequence is that of Large ribosomal subunit protein uL24 from Clostridium tetani (strain Massachusetts / E88).